The primary structure comprises 318 residues: Transaldolase (318 aa).

Lysine 132 acts as the Schiff-base intermediate with substrate in catalysis.

It belongs to the transaldolase family. Type 1 subfamily. In terms of assembly, homodimer.

Its subcellular location is the cytoplasm. It carries out the reaction D-sedoheptulose 7-phosphate + D-glyceraldehyde 3-phosphate = D-erythrose 4-phosphate + beta-D-fructose 6-phosphate. The protein operates within carbohydrate degradation; pentose phosphate pathway; D-glyceraldehyde 3-phosphate and beta-D-fructose 6-phosphate from D-ribose 5-phosphate and D-xylulose 5-phosphate (non-oxidative stage): step 2/3. Functionally, transaldolase is important for the balance of metabolites in the pentose-phosphate pathway. The polypeptide is Transaldolase (Shewanella putrefaciens (strain CN-32 / ATCC BAA-453)).